The chain runs to 426 residues: Phosphomethylpyrimidine synthase (426 aa).

Residues Asn65, Met94, Tyr123, His162, 184–186, 225–228, and Glu264 each bind substrate; these read SRG and DGMR. His268 serves as a coordination point for Zn(2+). Substrate is bound at residue Tyr291. A Zn(2+)-binding site is contributed by His332. [4Fe-4S] cluster is bound by residues Cys408, Cys411, and Cys415.

It belongs to the ThiC family. The cofactor is [4Fe-4S] cluster.

The catalysed reaction is 5-amino-1-(5-phospho-beta-D-ribosyl)imidazole + S-adenosyl-L-methionine = 4-amino-2-methyl-5-(phosphooxymethyl)pyrimidine + CO + 5'-deoxyadenosine + formate + L-methionine + 3 H(+). Its pathway is cofactor biosynthesis; thiamine diphosphate biosynthesis. Functionally, catalyzes the synthesis of the hydroxymethylpyrimidine phosphate (HMP-P) moiety of thiamine from aminoimidazole ribotide (AIR) in a radical S-adenosyl-L-methionine (SAM)-dependent reaction. In Methanococcus maripaludis (strain C7 / ATCC BAA-1331), this protein is Phosphomethylpyrimidine synthase.